The primary structure comprises 651 residues: UvrABC system protein C (651 aa).

Positions 21–100 (TEPGCYLMRD…IKNQQPHFNV (80 aa)) constitute a GIY-YIG domain. One can recognise a UVR domain in the interval 210 to 245 (DELRQLLNQQMERYAERLDFESAARIRDQLQGIDQL).

The protein belongs to the UvrC family. As to quaternary structure, interacts with UvrB in an incision complex.

The protein localises to the cytoplasm. Its function is as follows. The UvrABC repair system catalyzes the recognition and processing of DNA lesions. UvrC both incises the 5' and 3' sides of the lesion. The N-terminal half is responsible for the 3' incision and the C-terminal half is responsible for the 5' incision. In Synechococcus sp. (strain CC9311), this protein is UvrABC system protein C.